A 374-amino-acid chain; its full sequence is Proton-coupled zinc antiporter SLC30A8 (374 aa).

Residues 1–67 (MKGSEEAYLV…QREQTFAKKK (67 aa)) lie on the Cytoplasmic side of the membrane. The segment at 18–48 (YSLTKDSEKNHPSKPPLQDEENPQSKYHCHN) is disordered. Zn(2+)-binding residues include H45, C46, and H47. The HCH Motif; seals regulatory zinc-binding pocket signature appears at 45 to 47 (HCH). A helical transmembrane segment spans residues 68-88 (LCIASLICFVFISAEIVGGYI). The Lumenal, vesicle portion of the chain corresponds to 89 to 91 (AGS). Residues 92-112 (LAVVTDAAHLLVDLSSFFISL) form a helical membrane-spanning segment. H100, D104, and H131 together coordinate Zn(2+). Over 113 to 134 (CSLWLSSKSSTTRLTFGWHRAE) the chain is Cytoplasmic. Residues 135–155 (ILGALMSVITIWLVTGVLVYL) form a helical membrane-spanning segment. Over 156 to 169 (ACERLIRPDYTIDG) the chain is Lumenal, vesicle. A helical transmembrane segment spans residues 170–190 (TVMLITSACALGANLVLALIL). The Cytoplasmic segment spans residues 191–222 (HQSGHGHSHAGGKHEHMASEYKPQTNASIRAA). A helical transmembrane segment spans residues 223–243 (FIHVIGDLFQSISVLISALII). Residues H225 and D229 each contribute to the Zn(2+) site. The Lumenal, vesicle portion of the chain corresponds to 244 to 251 (YFKPEYKM). Residues 252–272 (ADPICTFIFSIFVLITTVTVL) traverse the membrane as a helical segment. Residues 273–374 (RDLLTVLMEG…ECMFCYEPTQ (102 aa)) are Cytoplasmic-facing. Zn(2+) is bound by residues H306, H323, H350, E357, C366, and C369.

The protein belongs to the cation diffusion facilitator (CDF) transporter (TC 2.A.4) family. SLC30A subfamily. Homodimer.

It localises to the cytoplasmic vesicle. It is found in the secretory vesicle membrane. Its subcellular location is the cell membrane. It carries out the reaction Zn(2+)(in) + 2 H(+)(out) = Zn(2+)(out) + 2 H(+)(in). Its function is as follows. Proton-coupled zinc ion antiporter mediating the entry of zinc into the lumen of pancreatic beta cell secretory granules, thereby regulating insulin secretion. The chain is Proton-coupled zinc antiporter SLC30A8 (slc30a8) from Xenopus tropicalis (Western clawed frog).